The primary structure comprises 494 residues: DEAD-box ATP-dependent RNA helicase CshA (494 aa).

The Q motif signature appears at 3 to 31 (ITFQDFNLSSDLMKAINRMGFEEATPIQA). Residues 34–204 (IPLGLSNKDV…ERFMTEPEHV (171 aa)) form the Helicase ATP-binding domain. 47–54 (AQTGTGKT) contributes to the ATP binding site. The DEAD box signature appears at 152 to 155 (DEAD). One can recognise a Helicase C-terminal domain in the interval 215–375 (NIQQFYLEVQ…RMKEPTLDEA (161 aa)). Positions 413-494 (VTVVAAAIKM…SGDRRQKKSY (82 aa)) are required for dimerization or oligomerization. Residues 429–494 (DTPVRLTDEA…SGDRRQKKSY (66 aa)) are disordered. Over residues 443–452 (KRYKNQRSSK) the composition is skewed to basic residues. A compositionally biased stretch (basic and acidic residues) spans 473 to 488 (SYDKKRSNDRRSSGDR).

It belongs to the DEAD box helicase family. CshA subfamily. As to quaternary structure, homodimer or oligomer. May interact with RNA helicases CshB and DbpA (DeaD). Probably a component of the RNA degradosome complex composed of rny, rnjA, rnjB, pnp, pfkA and eno, and possibly also rnpA (although rnjA and rnjB's presence is unclear). Interacts with ribosomal proteins L1 and L3 (rplA and rplC) and the protein component of RNase RnpA. Interacts with the RNA polymerase core. Mg(2+) serves as cofactor.

Its subcellular location is the cytoplasm. The protein localises to the nucleoid. It is found in the cell membrane. It carries out the reaction ATP + H2O = ADP + phosphate + H(+). With respect to regulation, RNA helicase activity is inhibited by EDTA. The most abundant DEAD-box RNA helicase. An ATP-dependent RNA helicase with RNA-dependent ATPase activity. May work in conjunction with the cold shock proteins to ensure proper initiation of transcription at low and optimal temperatures. In vitro, unwinds dsRNA in both 5'- and 3'- directions. Plays a role in ribosomal 50S subunit assembly. Its deletion leads to changes in mRNA levels for over 200 transcripts. The polypeptide is DEAD-box ATP-dependent RNA helicase CshA (Bacillus subtilis (strain 168)).